A 566-amino-acid polypeptide reads, in one-letter code: Oxygen-dependent choline dehydrogenase (566 aa).

7 to 36 (DYIICGAGSAGNVLATRLTEDPNVTVLLLE) lines the FAD pocket. A disordered region spans residues 185 to 204 (EGFGPMDRTVTPKGRRASTA). H474 acts as the Proton acceptor in catalysis.

The protein belongs to the GMC oxidoreductase family. FAD serves as cofactor.

The enzyme catalyses choline + A = betaine aldehyde + AH2. It catalyses the reaction betaine aldehyde + NAD(+) + H2O = glycine betaine + NADH + 2 H(+). It functions in the pathway amine and polyamine biosynthesis; betaine biosynthesis via choline pathway; betaine aldehyde from choline (cytochrome c reductase route): step 1/1. Functionally, involved in the biosynthesis of the osmoprotectant glycine betaine. Catalyzes the oxidation of choline to betaine aldehyde and betaine aldehyde to glycine betaine at the same rate. The protein is Oxygen-dependent choline dehydrogenase of Burkholderia vietnamiensis (strain G4 / LMG 22486) (Burkholderia cepacia (strain R1808)).